We begin with the raw amino-acid sequence, 102 residues long: uncharacterized protein (102 aa).

This is an uncharacterized protein from Haemophilus influenzae (strain ATCC 51907 / DSM 11121 / KW20 / Rd).